Consider the following 117-residue polypeptide: Large ribosomal subunit protein bL19 (117 aa).

It belongs to the bacterial ribosomal protein bL19 family.

Its function is as follows. This protein is located at the 30S-50S ribosomal subunit interface and may play a role in the structure and function of the aminoacyl-tRNA binding site. In Vesicomyosocius okutanii subsp. Calyptogena okutanii (strain HA), this protein is Large ribosomal subunit protein bL19.